Reading from the N-terminus, the 147-residue chain is Nucleoside diphosphate kinase (147 aa).

Residues K9, F57, R85, T91, R102, and N112 each coordinate ATP. Catalysis depends on H115, which acts as the Pros-phosphohistidine intermediate.

It belongs to the NDK family. In terms of assembly, homotetramer. It depends on Mg(2+) as a cofactor.

The protein resides in the cytoplasm. It catalyses the reaction a 2'-deoxyribonucleoside 5'-diphosphate + ATP = a 2'-deoxyribonucleoside 5'-triphosphate + ADP. The catalysed reaction is a ribonucleoside 5'-diphosphate + ATP = a ribonucleoside 5'-triphosphate + ADP. Functionally, major role in the synthesis of nucleoside triphosphates other than ATP. The ATP gamma phosphate is transferred to the NDP beta phosphate via a ping-pong mechanism, using a phosphorylated active-site intermediate. The protein is Nucleoside diphosphate kinase of Listeria innocua serovar 6a (strain ATCC BAA-680 / CLIP 11262).